The following is a 336-amino-acid chain: Fructose-1,6-bisphosphatase class 1 (336 aa).

Glu91, Asp114, Leu116, and Asp117 together coordinate Mg(2+). Substrate is bound by residues Asp117–Ser120, Asn210, Tyr243, and Lys273. Residue Glu279 participates in Mg(2+) binding.

This sequence belongs to the FBPase class 1 family. As to quaternary structure, homotetramer. Mg(2+) serves as cofactor.

It localises to the cytoplasm. It carries out the reaction beta-D-fructose 1,6-bisphosphate + H2O = beta-D-fructose 6-phosphate + phosphate. It participates in carbohydrate biosynthesis; gluconeogenesis. The chain is Fructose-1,6-bisphosphatase class 1 from Dichelobacter nodosus (strain VCS1703A).